A 212-amino-acid chain; its full sequence is Peptidyl-prolyl cis-trans isomerase-like 3 (212 aa).

The region spanning 1–198 (MSVTLHTTHG…EGEEGGYEAI (198 aa)) is the PPIase cyclophilin-type domain.

It belongs to the cyclophilin-type PPIase family. PPIL3 subfamily.

The enzyme catalyses [protein]-peptidylproline (omega=180) = [protein]-peptidylproline (omega=0). Its function is as follows. PPIases accelerate the folding of proteins. It catalyzes the cis-trans isomerization of proline imidic peptide bonds in oligopeptides. This chain is Peptidyl-prolyl cis-trans isomerase-like 3 (cyp10), found in Aspergillus fumigatus (strain ATCC MYA-4609 / CBS 101355 / FGSC A1100 / Af293) (Neosartorya fumigata).